The following is a 1374-amino-acid chain: DNA-directed RNA polymerase subunit beta (1374 aa).

This sequence belongs to the RNA polymerase beta chain family. In terms of assembly, the RNAP catalytic core consists of 2 alpha, 1 beta, 1 beta' and 1 omega subunit. When a sigma factor is associated with the core the holoenzyme is formed, which can initiate transcription.

The enzyme catalyses RNA(n) + a ribonucleoside 5'-triphosphate = RNA(n+1) + diphosphate. Its function is as follows. DNA-dependent RNA polymerase catalyzes the transcription of DNA into RNA using the four ribonucleoside triphosphates as substrates. In Paracidovorax citrulli (strain AAC00-1) (Acidovorax citrulli), this protein is DNA-directed RNA polymerase subunit beta.